A 355-amino-acid chain; its full sequence is Galectin-9 (355 aa).

Galectin domains are found at residues 17–148 (FTGM…ISFQ) and 227–355 (FFTS…HVQT). A beta-D-galactoside contacts are provided by residues N48, H61, R65, N75, 82-88 (WGTEERK), H267, R271, T281, and 287-293 (WGSEERS).

The protein resides in the cytoplasm. It is found in the nucleus. Its subcellular location is the secreted. In terms of biological role, binds galactosides. Has high affinity for the Forssman pentasaccharide. Ligand for HAVCR2/TIM3. Binding to HAVCR2 induces T-helper type 1 lymphocyte (Th1) death. Also stimulates bactericidal activity in infected macrophages by causing macrophage activation and IL1B secretion which restricts intracellular bacterial growth. Ligand for P4HB; the interaction retains P4HB at the cell surface of Th2 T helper cells, increasing disulfide reductase activity at the plasma membrane, altering the plasma membrane redox state and enhancing cell migration. Ligand for CD44; the interaction enhances binding of SMAD3 to the FOXP3 promoter, leading to up-regulation of FOXP3 expression and increased induced regulatory T (iTreg) cell stability and suppressive function. Promotes ability of mesenchymal stromal cells to suppress T-cell proliferation. Expands regulatory T-cells and induces cytotoxic T-cell apoptosis following virus infection. Activates ERK1/2 phosphorylation inducing cytokine (IL-6, IL-8, IL-12) and chemokine (CCL2) production in mast and dendritic cells. Inhibits degranulation and induces apoptosis of mast cells. Induces maturation and migration of dendritic cells. Inhibits natural killer (NK) cell function. Can transform NK cell phenotype from peripheral to decidual during pregnancy. Astrocyte derived galectin-9 enhances microglial TNF production. May play a role in thymocyte-epithelial interactions relevant to the biology of the thymus. May provide the molecular basis for urate flux across cell membranes, allowing urate that is formed during purine metabolism to efflux from cells and serving as an electrogenic transporter that plays an important role in renal and gastrointestinal urate excretion. Highly selective to the anion urate. The chain is Galectin-9 (LGALS9) from Bos taurus (Bovine).